The chain runs to 213 residues: Small ribosomal subunit protein eS6 (213 aa).

It belongs to the eukaryotic ribosomal protein eS6 family.

The chain is Small ribosomal subunit protein eS6 from Sulfolobus acidocaldarius (strain ATCC 33909 / DSM 639 / JCM 8929 / NBRC 15157 / NCIMB 11770).